Consider the following 401-residue polypeptide: Cysteine desulfurase CsdA (401 aa).

Residue lysine 222 is modified to N6-(pyridoxal phosphate)lysine. The active-site Cysteine persulfide intermediate is the cysteine 358.

It belongs to the class-V pyridoxal-phosphate-dependent aminotransferase family. Csd subfamily. Homodimer. Forms a heterodimer with CsdE. Pyridoxal 5'-phosphate is required as a cofactor.

It catalyses the reaction (sulfur carrier)-H + L-cysteine = (sulfur carrier)-SH + L-alanine. The enzyme catalyses L-selenocysteine + AH2 = hydrogenselenide + L-alanine + A + H(+). The catalysed reaction is 3-sulfino-L-alanine + H2O = sulfite + L-alanine + H(+). Cysteine desulfurase activity is increased 2-fold in the presence of CsdE. Functionally, catalyzes the removal of elemental sulfur and selenium atoms from L-cysteine, L-cystine, L-selenocysteine, and L-selenocystine to produce L-alanine, and transiently retains the released sulfur atom on a cysteine residue, in the form of a persulfide. Can also desulfinate L-cysteine sulfinate (3-sulfino-L-alanine), which is the best substrate of the enzyme. Functions as a selenium delivery protein in the pathway for the biosynthesis of selenophosphate. Seems to participate in Fe/S biogenesis by recruiting the SufBCD-SufE proteins. Transfers sulfur to CsdE that increases the cysteine desulfurase activity of CsdA. Can also transfer sulfur directly to TcdA/CsdL in vitro. Appears to support the function of TcdA in the generation of cyclic threonylcarbamoyladenosine at position 37 (ct(6)A37) in tRNAs that read codons beginning with adenine. In Escherichia coli (strain K12), this protein is Cysteine desulfurase CsdA (csdA).